A 56-amino-acid chain; its full sequence is Small ribosomal subunit protein bS21 (56 aa).

The protein belongs to the bacterial ribosomal protein bS21 family.

The sequence is that of Small ribosomal subunit protein bS21 from Synechococcus sp. (strain WH7803).